A 331-amino-acid polypeptide reads, in one-letter code: Thiamine thiazole synthase (331 aa).

Substrate is bound by residues S82, 103–104 (EA), G111, and V176. At C210 the chain carries 2,3-didehydroalanine (Cys). Substrate contacts are provided by residues D212, H242, M296, and 306–308 (RMG).

This sequence belongs to the THI4 family. In terms of assembly, homooctamer. Requires Fe cation as cofactor. Post-translationally, during the catalytic reaction, a sulfide is transferred from Cys-210 to a reaction intermediate, generating a dehydroalanine residue.

It is found in the cytoplasm. Its subcellular location is the nucleus. The catalysed reaction is [ADP-thiazole synthase]-L-cysteine + glycine + NAD(+) = [ADP-thiazole synthase]-dehydroalanine + ADP-5-ethyl-4-methylthiazole-2-carboxylate + nicotinamide + 3 H2O + 2 H(+). Its function is as follows. Involved in biosynthesis of the thiamine precursor thiazole. Catalyzes the conversion of NAD and glycine to adenosine diphosphate 5-(2-hydroxyethyl)-4-methylthiazole-2-carboxylic acid (ADT), an adenylated thiazole intermediate. The reaction includes an iron-dependent sulfide transfer from a conserved cysteine residue of the protein to a thiazole intermediate. The enzyme can only undergo a single turnover, which suggests it is a suicide enzyme. May have additional roles in adaptation to various stress conditions and in DNA damage tolerance. This chain is Thiamine thiazole synthase, found in Eremothecium gossypii (strain ATCC 10895 / CBS 109.51 / FGSC 9923 / NRRL Y-1056) (Yeast).